A 261-amino-acid chain; its full sequence is Class II histocompatibility antigen, M alpha chain (261 aa).

The signal sequence occupies residues 1-26 (MEHEQKSGAVLLRLLRLLWLLPHSWA). The segment at 27–124 (VLEASTPVLW…KLEGQIPVSR (98 aa)) is alpha-1. Residues 27 to 231 (VLEASTPVLW…ALPSDLLENA (205 aa)) are Lumenal-facing. Asn-41 carries an N-linked (GlcNAc...) asparagine glycan. 2 disulfides stabilise this stretch: Cys-50-Cys-105 and Cys-147-Cys-202. The Ig-like C1-type domain maps to 114 to 215 (PKLEGQIPVS…HEIDRYTAIA (102 aa)). The interval 125–217 (GLSVAEVFTL…IDRYTAIAYW (93 aa)) is alpha-2. Positions 218 to 231 (VPQNALPSDLLENA) are connecting peptide. Residues 232 to 252 (LCGVAFALGVLGTIIGIVFFL) traverse the membrane as a helical segment. Over 253–261 (CSQRPCSGD) the chain is Cytoplasmic.

It belongs to the MHC class II family. Heterodimer of an alpha chain (DMA) and a beta chain (DMB). Interacts with MHCII; this interaction mediates rapid selection of high-affinity peptides.

Its subcellular location is the late endosome membrane. The protein resides in the lysosome membrane. Its function is as follows. Plays a critical role in catalyzing the release of class II-associated invariant chain peptide (CLIP) from newly synthesized MHC class II molecules and freeing the peptide binding site for acquisition of antigenic peptides. In Mus musculus (Mouse), this protein is Class II histocompatibility antigen, M alpha chain (H2-DMa).